A 431-amino-acid polypeptide reads, in one-letter code: Probable amino-acid ABC transporter periplasmic-binding protein y4oP (431 aa).

The signal sequence occupies residues M1 to A25.

Belongs to the bacterial solute-binding protein 1 family.

It localises to the periplasm. Its function is as follows. Probably part of the binding-protein-dependent transport system y4oPQRS. This system probably transports a sugar-like molecule. The sequence is that of Probable amino-acid ABC transporter periplasmic-binding protein y4oP from Sinorhizobium fredii (strain NBRC 101917 / NGR234).